The chain runs to 349 residues: Protein AMBP (349 aa).

The N-terminal stretch at 1-19 is a signal peptide; it reads MLGLGTLFLLLAACPASRA. Asn35 is a glycosylation site (N-linked (GlcNAc...) asparagine). The 3-hydroxy-L-kynurenine site is built by Cys52 and Lys110. Residues Cys90 and Cys187 are joined by a disulfide bond. An N-linked (GlcNAc...) asparagine glycan is attached at Asn114. 3-hydroxy-L-kynurenine is bound by residues Lys136 and Lys148. Ser214 is a glycosylation site (O-linked (Xyl...) (chondroitin sulfate) serine). Intrachain disulfides connect Cys230-Cys280, Cys239-Cys263, Cys255-Cys276, Cys286-Cys336, Cys295-Cys319, and Cys311-Cys332. BPTI/Kunitz inhibitor domains follow at residues 230-280 and 286-336; these read CQLS…LQTC and CSLP…KEYC.

This sequence in the N-terminal section; belongs to the calycin superfamily. Lipocalin family. Monomer. Homodimer. In plasma, it occurs as a monomer or dimer and in covalently-linked complexes with immunoglobulin A (IgA), ALB/albumin and F2/prothrombin. Chromophore-bound alpha-1-microglobulin interacts with the constant region of immunoglobulin A. Chromophore-bound alpha-1-microglobulin interacts with ALB with molar ratio 2:1 and 1:1; this interaction does not prevent fatty acid binding to ALB. Interacts with F2/prothrombin (via N-terminus) with molar ratio 2:1 and 1:1; this interaction does not prevent the activation of prothrombin to thrombin. Interacts with NDUFAB1, a subunit of mitochondrial complex I. Interacts with FN1. In terms of assembly, I-alpha-I plasma protease inhibitors are assembled from one or two heavy chains (HC) and one light chain, bikunin. Inter-alpha-inhibitor (I-alpha-I) is composed of ITIH1/HC1, ITIH2/HC2 and bikunin, and pre-alpha-inhibitor (P-alpha-I) of ITIH3/HC3 and bikunin. Interacts with TNFAIP6 (via Link domain). As to quaternary structure, monomer. Also occurs as a complex with tryptase in mast cells. In terms of processing, the precursor is proteolytically processed into separately functioning proteins. 3-hydroxykynurenine, an oxidized tryptophan metabolite that is common in biological fluids, reacts with Cys-53, Lys-111, Lys-137, and Lys-149 to form heterogeneous polycyclic chromophores including hydroxanthommatin. The reaction by alpha-1-microglobulin is autocatalytic; the human protein forms chromophore even when expressed in insect and bacterial cells. The chromophore can react with accessible cysteines forming non-reducible thioether cross-links with other molecules of alpha-1-microglobulin or with other proteins such as Ig alpha-1 chain C region 'Cys-352'. Post-translationally, heavy chains are interlinked with bikunin via a chondroitin 4-sulfate bridge to the C-terminal aspartate. In terms of processing, proteolytically cleaved by PRSS3 at Kunitz domain 2. In terms of tissue distribution, expressed by the liver and secreted in plasma.

It is found in the secreted. It localises to the endoplasmic reticulum. The protein resides in the cytoplasm. The protein localises to the cytosol. Its subcellular location is the cell membrane. It is found in the nucleus membrane. It localises to the mitochondrion inner membrane. The protein resides in the extracellular space. The protein localises to the extracellular matrix. Its function is as follows. Antioxidant and tissue repair protein with reductase, heme-binding and radical-scavenging activities. Removes and protects against harmful oxidants and repairs macromolecules in intravascular and extravascular spaces and in intracellular compartments. Intravascularly, plays a regulatory role in red cell homeostasis by preventing heme- and reactive oxygen species-induced cell damage. Binds and degrades free heme to protect fetal and adult red blood cells from hemolysis. Reduces extracellular methemoglobin, a Fe3+ (ferric) form of hemoglobin that cannot bind oxygen, back to the Fe2+ (ferrous) form deoxyhemoglobin, which has oxygen-carrying potential. Upon acute inflammation, inhibits oxidation of low-density lipoprotein particles by MPO and limits vascular damage. Extravascularly, protects from oxidation products formed on extracellular matrix structures and cell membranes. Catalyzes the reduction of carbonyl groups on oxidized collagen fibers and preserves cellular and extracellular matrix ultrastructures. Importantly, counteracts the oxidative damage at blood-placenta interface, preventing leakage of free fetal hemoglobin into the maternal circulation. Intracellularly, has a role in maintaining mitochondrial redox homeostasis. Bound to complex I of the respiratory chain of mitochondria, may scavenge free radicals and preserve mitochondrial ATP synthesis. Protects renal tubule epithelial cells from heme-induced oxidative damage to mitochondria. Reduces cytochrome c from Fe3+ (ferric) to the Fe2+ (ferrous) state through formation of superoxide anion radicals in the presence of ascorbate or NADH/NADPH electron donor cofactors, ascorbate being the preferred cofactor. Has a chaperone role in facilitating the correct folding of bikunin in the endoplasmic reticulum compartment. Functionally, kunitz-type serine protease inhibitor and structural component of extracellular matrix with a role in extracellular space remodeling and cell adhesion. Among others, has antiprotease activity toward kallikrein, a protease involved in airway inflammation; inhibits GZMK/granzyme, a granule-stored serine protease involved in NK and T cell cytotoxic responses; and inhibits PLG/plasmin, a protease required for activation of matrix metalloproteinases. As part of I-alpha-I complex, provides for the heavy chains to be transferred from I-alpha-I complex to hyaluronan in the presence of TNFAIP6, in a dynamic process that releases free bikunin and remodels extracellular matrix proteoglycan structures. Free bikunin, but not its heavy chain-bound form, acts as a potent protease inhibitor in airway secretions. Part of hyaluronan-rich extracellular matrix that surrounds oocyte during cumulus oophorus expansion, an indispensable process for proper ovulation. Also inhibits calcium oxalate crystallization. In terms of biological role, kunitz-type serine protease inhibitor. Has high catalytic efficiency for F10/blood coagulation factor Xa and may act as an anticoagulant by inhibiting prothrombin activation. Inhibits trypsin and mast cell CMA1/chymase and tryptase proteases. The chain is Protein AMBP (AMBP) from Mesocricetus auratus (Golden hamster).